The chain runs to 470 residues: Probable V-type proton ATPase subunit H 2 (470 aa).

It belongs to the V-ATPase H subunit family. V-ATPase is a heteromultimeric enzyme made up of two complexes: the ATP-hydrolytic V1 complex and the proton translocation V0 complex. The V1 complex consists of three catalytic AB heterodimers that form a heterohexamer, three peripheral stalks each consisting of EG heterodimers, one central rotor including subunits D and F, and the regulatory subunits C and H. The proton translocation complex V0 consists of the proton transport subunit a, a ring of proteolipid subunits c9c'', rotary subunit d, subunits e and f, and the accessory subunits vah-19/Ac45 and vah-20/PRR.

Subunit of the V1 complex of vacuolar(H+)-ATPase (V-ATPase), a multisubunit enzyme composed of a peripheral complex (V1) that hydrolyzes ATP and a membrane integral complex (V0) that translocates protons. V-ATPase is responsible for acidifying and maintaining the pH of intracellular compartments and in some cell types, is targeted to the plasma membrane, where it is responsible for acidifying the extracellular environment. Subunit H is essential for V-ATPase activity, but not for the assembly of the complex. The protein is Probable V-type proton ATPase subunit H 2 of Caenorhabditis elegans.